A 601-amino-acid polypeptide reads, in one-letter code: FAD-binding monooxygenase stcW (601 aa).

FAD-binding positions include 42–43 (FS), Glu-64, Trp-73, Asp-84, Tyr-90, and Val-133.

It belongs to the FAD-binding monooxygenase family. Requires FAD as cofactor.

The protein operates within mycotoxin biosynthesis; sterigmatocystin biosynthesis. Its function is as follows. FAD-binding monooxygenase; part of the gene cluster that mediates the biosynthesis of sterigmatocystin (ST), a polyketide-derived furanocoumarin which is part of the most toxic and carcinogenic compounds among the known mycotoxins. The first step in the biosynthesis of sterigmatocystin is the production of hexanoate by the fatty acid synthase (FAS) units stcJ and stcK. The polyketide backbone is assembled by the non-reducing polyketide synthase stcA by condensation of the starter hexanoyl-CoA and 7 malonyl-CoA extender units followed by cyclization and release of norsolorinic acid. Norsolorinic acid is the first stable intermediate in the biosynthesis of sterigmatocystin and is converted into averantin (AVN) by the ketoreductase stcE which reduces the hexanoate ketone to an alcohol. Averantin is then oxidized into 5'-hydroxyaverantin (HAVN) by the cytochrome P450 monooxygenase stcF. 5'-hydroxyaverantin is further converted to 5'-oxyaverantin (OAVN) by the 5'-hydroxyaverantin dehydrogenase stcG. The next step is the conversion of OAVN into averufin (AVF) which is catalyzed by a yet to be identified enzyme. The cytochrome P450 monooxygenase stcB and the flavin-binding monooxygenase stcW are both required for the conversion of averufin to 1-hydroxyversicolorone. The esterase stcI probably catalyzes the formation of versiconal hemiacetal acetate from 1-hydroxyversicolorone. The oxydoreductase stcN then probably catalyzes the biosynthetic step from versiconal to versicolorin B (VERB). The next step is performed by the versicolorin B desaturase stcL to produce versicolorin A (VERA). The ketoreductase stcU and the cytochrome P450 monooxygenase stcS are involved in the conversion of versicolorin A to demethylsterigmatocystin. The Baeyer-Villiger oxidas stcQ and the reductase stcR might be involved in the biosynthetic step from versicolorin A to demethylsterigmatocystin. The final step in the biosynthesis of sterigmatocystin is the methylation of demethylsterigmatocystin catalyzed by the methyltransferase stcP. The polypeptide is FAD-binding monooxygenase stcW (Emericella nidulans (strain FGSC A4 / ATCC 38163 / CBS 112.46 / NRRL 194 / M139) (Aspergillus nidulans)).